Here is a 262-residue protein sequence, read N- to C-terminus: 3-methyl-2-oxobutanoate hydroxymethyltransferase (262 aa).

Mg(2+)-binding residues include aspartate 42 and aspartate 81. Residues 42 to 43 (DS), aspartate 81, and lysine 110 contribute to the 3-methyl-2-oxobutanoate site. Residue glutamate 112 participates in Mg(2+) binding. The Proton acceptor role is filled by glutamate 180.

The protein belongs to the PanB family. As to quaternary structure, homodecamer; pentamer of dimers. It depends on Mg(2+) as a cofactor.

Its subcellular location is the cytoplasm. The enzyme catalyses 3-methyl-2-oxobutanoate + (6R)-5,10-methylene-5,6,7,8-tetrahydrofolate + H2O = 2-dehydropantoate + (6S)-5,6,7,8-tetrahydrofolate. Its pathway is cofactor biosynthesis; (R)-pantothenate biosynthesis; (R)-pantoate from 3-methyl-2-oxobutanoate: step 1/2. Its function is as follows. Catalyzes the reversible reaction in which hydroxymethyl group from 5,10-methylenetetrahydrofolate is transferred onto alpha-ketoisovalerate to form ketopantoate. This chain is 3-methyl-2-oxobutanoate hydroxymethyltransferase, found in Legionella pneumophila (strain Corby).